Reading from the N-terminus, the 140-residue chain is ATP synthase epsilon chain (140 aa).

Belongs to the ATPase epsilon chain family. In terms of assembly, F-type ATPases have 2 components, CF(1) - the catalytic core - and CF(0) - the membrane proton channel. CF(1) has five subunits: alpha(3), beta(3), gamma(1), delta(1), epsilon(1). CF(0) has three main subunits: a, b and c.

The protein localises to the cell inner membrane. Functionally, produces ATP from ADP in the presence of a proton gradient across the membrane. This chain is ATP synthase epsilon chain, found in Colwellia maris.